The chain runs to 258 residues: MQTILHTQQVEEQERFSYWRDAICDVFVKLDASQLSPHTFTGRMETGSLKDIQISEVNADSQRVVRSNRQIQKSVEDYFLVSLQTKGQAYIKQDQREARLQPGDFTLYDSTRPYVLHFEQPFQQIVFQFPRSLLLAAVRRQNKLPAILNPGTQHPVTTMVSTLLRTVASSYLHLDSITRLRVAETTLDLLATALTTISGVKLNEVNSMANVHRAGARAFISTHLADPDLTPDVVPSAKGFPPAISINYLKRKDNPSLL.

This is an uncharacterized protein from Bacillus sp. (strain OxB-1).